The following is a 423-amino-acid chain: Glucose-1-phosphate adenylyltransferase (423 aa).

Residues Tyr-98, Gly-163, 178–179 (EK), and Ser-189 each bind alpha-D-glucose 1-phosphate.

Belongs to the bacterial/plant glucose-1-phosphate adenylyltransferase family. In terms of assembly, homotetramer.

The catalysed reaction is alpha-D-glucose 1-phosphate + ATP + H(+) = ADP-alpha-D-glucose + diphosphate. Its pathway is glycan biosynthesis; glycogen biosynthesis. Its function is as follows. Involved in the biosynthesis of ADP-glucose, a building block required for the elongation reactions to produce glycogen. Catalyzes the reaction between ATP and alpha-D-glucose 1-phosphate (G1P) to produce pyrophosphate and ADP-Glc. In Thermotoga maritima (strain ATCC 43589 / DSM 3109 / JCM 10099 / NBRC 100826 / MSB8), this protein is Glucose-1-phosphate adenylyltransferase.